A 119-amino-acid chain; its full sequence is Large ribosomal subunit protein uL22 (119 aa).

It belongs to the universal ribosomal protein uL22 family. Part of the 50S ribosomal subunit.

Functionally, this protein binds specifically to 23S rRNA; its binding is stimulated by other ribosomal proteins, e.g. L4, L17, and L20. It is important during the early stages of 50S assembly. It makes multiple contacts with different domains of the 23S rRNA in the assembled 50S subunit and ribosome. The globular domain of the protein is located near the polypeptide exit tunnel on the outside of the subunit, while an extended beta-hairpin is found that lines the wall of the exit tunnel in the center of the 70S ribosome. The sequence is that of Large ribosomal subunit protein uL22 from Rickettsia akari (strain Hartford).